A 377-amino-acid chain; its full sequence is Queuine tRNA-ribosyltransferase (377 aa).

The Proton acceptor role is filled by Asp89. Residues 89 to 93, Asp143, Gln188, and Gly215 contribute to the substrate site; that span reads DSGGF. Positions 246–252 are RNA binding; that stretch reads GVGKPED. Asp265 acts as the Nucleophile in catalysis. Residues 270-274 are RNA binding; important for wobble base 34 recognition; it reads TRNAR. Zn(2+)-binding residues include Cys303, Cys305, Cys308, and His334.

The protein belongs to the queuine tRNA-ribosyltransferase family. Homodimer. Within each dimer, one monomer is responsible for RNA recognition and catalysis, while the other monomer binds to the replacement base PreQ1. Zn(2+) serves as cofactor.

It catalyses the reaction 7-aminomethyl-7-carbaguanine + guanosine(34) in tRNA = 7-aminomethyl-7-carbaguanosine(34) in tRNA + guanine. Its pathway is tRNA modification; tRNA-queuosine biosynthesis. Catalyzes the base-exchange of a guanine (G) residue with the queuine precursor 7-aminomethyl-7-deazaguanine (PreQ1) at position 34 (anticodon wobble position) in tRNAs with GU(N) anticodons (tRNA-Asp, -Asn, -His and -Tyr). Catalysis occurs through a double-displacement mechanism. The nucleophile active site attacks the C1' of nucleotide 34 to detach the guanine base from the RNA, forming a covalent enzyme-RNA intermediate. The proton acceptor active site deprotonates the incoming PreQ1, allowing a nucleophilic attack on the C1' of the ribose to form the product. After dissociation, two additional enzymatic reactions on the tRNA convert PreQ1 to queuine (Q), resulting in the hypermodified nucleoside queuosine (7-(((4,5-cis-dihydroxy-2-cyclopenten-1-yl)amino)methyl)-7-deazaguanosine). The protein is Queuine tRNA-ribosyltransferase of Acinetobacter baumannii (strain AB307-0294).